The chain runs to 901 residues: MDQPRTHSGPTTASNPAPSSTNSSSAPSATNSKQERSSSSLSKPSSVVPSKDSPDGDAIAKTQAAALKNDMKSGDTSTLDGSSQNIIPNRASMQKYIDQSSDLLSRSSGVITPSMSLNASTNATNNDSSGNSANSSDLKIPIDRDNTIFKTFDTKTGQFLKNDDNEEEIRRNNKVDSIPPKNIYTNINNPSPSPPPSSKQPPSASAPQLPPATEPHKEQAAQQQPPGNASNFLRIFSNKKMRSHSVPTILHSSLRKLSSHNQYYRNQNILLNHPTPSGISKKKFSRNHHQPYLHSNNPLSSNPLSLKRAIFLNQQISGNASTNANNDNINNSTATSMTNQSFLSSSNFDLTLEDRINYIKATPTPVPFPPINLQGLKEIDLQEILKNPQLRHDIIFDPLLQFRPNLDGERGNKKRQLANIYWNDVQNEIYVYSKRPEIFQYNRSRLVPLFDTLRDVLLTIVPQKESPMINNVLDTELNIQELLKGSLIMSNLSGWLADLFKHHCAPMRDPWVDKMSNKFKEAERDSSLTRLIEGLRLVFQILETMKLDIANHQIRILRPALLSNAVEFEKQYFNTLIASKRVNLNTSLLWFDKKFNENVTAGLVRNPSSITIPDVYNICIRSIINLLSCRKMVREYPTPLSFDHARLILLRADIRQIVCILVCRLLFQQLVANDPSMDKATKEYVIHTYSTKRLKNEIISIITDEHGNCRWTKNTMSIAVHLCKVIDDLHREYDNNGSCEQARRPQLPSLDNSKITFAKSWLSKQTQPLSEVYGVLENRVFKSLEDAIFNRSECTIDGRVKQDFVYLYNTNNGNVGSTNTLSTTTDTASVKISPSLMSPSKTSTTTPTGNAIASRGLFAATELEEFENVYRHLYALINLHWSVFGPHYIEMLGDKVNKKGI.

Disordered stretches follow at residues 1–87 (MDQP…QNII), 106–139 (RSSG…SDLK), and 162–231 (NDDN…NASN). The span at 10–51 (PTTASNPAPSSTNSSSAPSATNSKQERSSSSLSKPSSVVPSK) shows a compositional bias: low complexity. Phosphoserine occurs at positions 40 and 53. Polar residues-rich tracts occupy residues 74–87 (GDTS…QNII) and 106–115 (RSSGVITPSM). A compositionally biased stretch (low complexity) spans 116–138 (SLNASTNATNNDSSGNSANSSDL). Phosphoserine is present on residues S191 and S193. Polar residues predominate over residues 220–231 (AAQQQPPGNASN). S245 is modified (phosphoserine).

The protein belongs to the TCP11 family.

It is found in the nucleus. In terms of biological role, high copy suppressor of a cyclic AMP-dependent protein kinase mutant. This is Protein SOK1 (SOK1) from Saccharomyces cerevisiae (strain ATCC 204508 / S288c) (Baker's yeast).